The primary structure comprises 1097 residues: Kinesin-like protein KIF1C (1097 aa).

The Kinesin motor domain maps to 5 to 347 (SVKVAVRVRP…LRYADRTKQI (343 aa)). 96–103 (GQTGAGKS) lines the ATP pocket. A Phosphoserine modification is found at S294. Positions 358–380 (NARLIRELQEEVARLRELLMAQG) form a coiled coil. The segment at 397 to 434 (GGVLPAASSPPAPASPSSPPPHNGELEPSFSPSAEPQI) is disordered. Positions 404-418 (SSPPAPASPSSPPPH) are enriched in pro residues. A coiled-coil region spans residues 437-478 (EEAMERLQETEKIIAELNETWEEKLRKTEALRMEREALLAEM). Phosphoserine is present on S491. The FHA domain occupies 520–587 (TRVGQVDVDI…LKSGNRIVMG (68 aa)). The stretch at 630-671 (EQQGIDIKLEMEKRLQDLENQYRKEKEEADLLLEQQRLYADS) forms a coiled coil. S671 and S673 each carry phosphoserine. Positions 824-868 (AEVEDLRAHIDKLTGILQEVKLQNSSKDRELQALRDRMLRMERVI) form a coiled coil. Disordered regions lie at residues 897–921 (EAVS…ERVS) and 946–1097 (QGLQ…GAAV). Position 911 is a phosphoserine (S911). Gly residues predominate over residues 949-958 (QGSGGRGGGL). The segment covering 997-1015 (GPQPPEEVTAPPPPPNRRP) has biased composition (pro residues). Over residues 1016–1026 (PSPRRPHRPRR) the composition is skewed to basic residues. The residue at position 1028 (S1028) is a Phosphoserine. An Omega-N-methylarginine modification is found at R1036. Residues 1059–1077 (QPQPYPAQRPGPRYPPYTT) are compositionally biased toward pro residues. T1077 carries the post-translational modification Phosphothreonine. S1086 bears the Phosphoserine mark. The segment covering 1086 to 1097 (SAPDLKESGAAV) has biased composition (basic and acidic residues).

This sequence belongs to the TRAFAC class myosin-kinesin ATPase superfamily. Kinesin family. Unc-104 subfamily.

It localises to the cytoplasm. It is found in the cytoskeleton. In terms of biological role, probable motor protein. In Rattus norvegicus (Rat), this protein is Kinesin-like protein KIF1C (Kif1c).